The sequence spans 341 residues: GTPase Obg (341 aa).

The Obg domain maps to 1–159 (MKFLDQAKIY…RTIWLRLKLI (159 aa)). One can recognise an OBG-type G domain in the interval 160–327 (ADAGLVGLPN…TLRQLARIID (168 aa)). Residues 166–173 (GLPNAGKS), 191–195 (FTTLH), 212–215 (DIPG), 279–282 (SQVD), and 308–310 (SAV) contribute to the GTP site. Positions 173 and 193 each coordinate Mg(2+).

The protein belongs to the TRAFAC class OBG-HflX-like GTPase superfamily. OBG GTPase family. In terms of assembly, monomer. Requires Mg(2+) as cofactor.

The protein localises to the cytoplasm. An essential GTPase which binds GTP, GDP and possibly (p)ppGpp with moderate affinity, with high nucleotide exchange rates and a fairly low GTP hydrolysis rate. Plays a role in control of the cell cycle, stress response, ribosome biogenesis and in those bacteria that undergo differentiation, in morphogenesis control. This Brucella abortus biovar 1 (strain 9-941) protein is GTPase Obg.